The sequence spans 180 residues: Kappa-casein (180 aa).

Positions 1–21 (MMKHFLLVVNILAVTLPFLAA) are cleaved as a signal peptide. Threonine 132, threonine 142, threonine 147, and threonine 153 each carry an O-linked (GalNAc...) threonine glycan. Position 160 is a phosphoserine; alternate (serine 160). Serine 160 carries O-linked (GalNAc...) serine; alternate glycosylation.

This sequence belongs to the kappa-casein family. Mammary gland specific. Secreted in milk.

Its subcellular location is the secreted. Kappa-casein stabilizes micelle formation, preventing casein precipitation in milk. The chain is Kappa-casein (CSN3) from Oryctolagus cuniculus (Rabbit).